Here is a 936-residue protein sequence, read N- to C-terminus: Altered inheritance of mitochondria protein 3 (936 aa).

4 disordered regions span residues 1 to 315, 341 to 795, 818 to 893, and 908 to 936; these read MGFW…LNQN, MSST…EATG, NLEK…KSLE, and SAAD…HKLK. Positions 36 to 54 are enriched in basic residues; the sequence is ASKKHYNNSKARRERKSGK. Residues Ser-57, Ser-58, and Ser-64 each carry the phosphoserine modification. Acidic residues predominate over residues 59–68; that stretch reads DEEYESEDEM. Over residues 69–84 the composition is skewed to basic and acidic residues; that stretch reads EHERKPTDIRSLKDPK. 2 stretches are compositionally biased toward low complexity: residues 93–105 and 130–152; these read PGQK…QQQQ and QSQY…GVMP. A compositionally biased stretch (polar residues) spans 166–244; the sequence is GSNSNATSYQ…YVSHGSTNLG (79 aa). 2 stretches are compositionally biased toward low complexity: residues 245–267 and 306–315; these read QSQF…VLPS and QQQQQPLNQN. Positions 341–354 are enriched in polar residues; it reads MSSTTNMQDSNPSY. A compositionally biased stretch (pro residues) spans 366-382; the sequence is GGQPPVPVRMQPQPPQP. A compositionally biased stretch (polar residues) spans 453–462; sequence IQPNTTSSAA. Ser-463 is modified (phosphoserine). Composition is skewed to basic and acidic residues over residues 475-489, 513-528, and 598-615; these read DNER…DEST, HGLD…KNAS, and EIKD…DRNV. 2 stretches are compositionally biased toward low complexity: residues 622–632 and 656–665; these read QSKSQSQSQSQ and SQSSNSSDSS. Thr-718 carries the post-translational modification Phosphothreonine. Basic and acidic residues predominate over residues 738–748; the sequence is DSSKDANKYEK. The segment covering 752–763 has biased composition (polar residues); the sequence is PVTSSIQAQQST. Thr-850 carries the post-translational modification Phosphothreonine. Positions 851–868 are enriched in pro residues; sequence PPRPPPSRSSPKKVPPVV. Basic residues predominate over residues 877-888; it reads KKPPVVPKKKPL.

This sequence belongs to the AIM3 family. Interacts with RVS167.

Its subcellular location is the membrane raft. This is Altered inheritance of mitochondria protein 3 (AIM3) from Saccharomyces cerevisiae (strain RM11-1a) (Baker's yeast).